Here is a 504-residue protein sequence, read N- to C-terminus: Maturase K (504 aa).

This sequence belongs to the intron maturase 2 family. MatK subfamily.

It localises to the plastid. Its subcellular location is the chloroplast. Usually encoded in the trnK tRNA gene intron. Probably assists in splicing its own and other chloroplast group II introns. This is Maturase K from Vigna unguiculata (Cowpea).